We begin with the raw amino-acid sequence, 375 residues long: Alcohol dehydrogenase 1 (375 aa).

Ala1 carries the N-acetylalanine modification. Residues Cys46, His68, Cys98, Cys101, Cys104, Cys112, and Cys175 each coordinate Zn(2+). Residues 200–205 (GLGGVG), Asp224, Lys229, 293–295 (VGV), and Arg370 each bind NAD(+).

It belongs to the zinc-containing alcohol dehydrogenase family. Class-I subfamily. In terms of assembly, homodimer. The cofactor is Zn(2+).

The protein localises to the cytoplasm. It carries out the reaction a primary alcohol + NAD(+) = an aldehyde + NADH + H(+). It catalyses the reaction a secondary alcohol + NAD(+) = a ketone + NADH + H(+). This is Alcohol dehydrogenase 1 from Columba livia (Rock dove).